Here is a 113-residue protein sequence, read N- to C-terminus: Iron-sulfur cluster insertion protein ErpA (113 aa).

Positions 41, 105, and 107 each coordinate iron-sulfur cluster.

This sequence belongs to the HesB/IscA family. In terms of assembly, homodimer. Iron-sulfur cluster serves as cofactor.

Functionally, required for insertion of 4Fe-4S clusters for at least IspG. The polypeptide is Iron-sulfur cluster insertion protein ErpA (Actinobacillus pleuropneumoniae serotype 3 (strain JL03)).